A 378-amino-acid chain; its full sequence is MENKKLHIALLFGGNSSEHDVSKRSAHNIYDALDKDKYDVSVFMFTKKGFLLGNKDSMRIFDGENEDDVVTEVIKDVDFSNPLANIQNLAEVKDVDVFYPVIHGNMGEDGTVQGLFRLLNKPWIGSGVASSGVSFDKDLTKKLLTLNGIRNTKYVLVTPENKADYPYAKVAEELGETLFVKPARQGSSVGIHKVRNEEEYNAALEDGFKYDYKILVEEAIKNPREVECSVLGNRDIKASKLGAIRIPESDDFYDYNNKFVDASGVVFEMPIKLPEKLTKEIQQMSLDAFRALDNRGLARMDFLVDKNDVPYFGEVNTLPGFTNISLYPQLWEVSGISYSELIDQLIQLAIDEFNDNAKIHYDFTKLGTEKVGKKIIGE.

The region spanning 141–347 (KKLLTLNGIR…YSELIDQLIQ (207 aa)) is the ATP-grasp domain. 171 to 226 (AEELGETLFVKPARQGSSVGIHKVRNEEEYNAALEDGFKYDYKILVEEAIKNPREV) contributes to the ATP binding site. Asp-301, Glu-314, and Asn-316 together coordinate Mg(2+).

The protein belongs to the D-alanine--D-alanine ligase family. Requires Mg(2+) as cofactor. It depends on Mn(2+) as a cofactor.

It localises to the cytoplasm. It catalyses the reaction 2 D-alanine + ATP = D-alanyl-D-alanine + ADP + phosphate + H(+). The protein operates within cell wall biogenesis; peptidoglycan biosynthesis. Its function is as follows. Cell wall formation. This Ligilactobacillus salivarius (strain UCC118) (Lactobacillus salivarius) protein is D-alanine--D-alanine ligase.